Reading from the N-terminus, the 196-residue chain is MQLKRVAEANLPTPWGDFLMVGFEEVATGQDHVALVFGDISGQTPVLARVHSECLTGDALFSLRCDCGFQLEAALSQIAEEGRGILLYHRQEGRNIGLLNKIRAYALQDQGYDTVEANHQLGFAADERDFTLCADMFKLLGVDEVRLLTNNPRKVEILTEAGINIVERVSLIVGRNPKNEHYLDTKAAKMGHLLSE.

49–53 contributes to the GTP binding site; it reads RVHSE. The Zn(2+) site is built by C54, C65, and C67. GTP-binding positions include Q70, 92-94, and T114; that span reads EGR. D126 acts as the Proton acceptor in catalysis. R128 (nucleophile) is an active-site residue. Residues T149 and K154 each coordinate GTP.

Belongs to the GTP cyclohydrolase II family. As to quaternary structure, homodimer. It depends on Zn(2+) as a cofactor.

It catalyses the reaction GTP + 4 H2O = 2,5-diamino-6-hydroxy-4-(5-phosphoribosylamino)-pyrimidine + formate + 2 phosphate + 3 H(+). The protein operates within cofactor biosynthesis; riboflavin biosynthesis; 5-amino-6-(D-ribitylamino)uracil from GTP: step 1/4. Catalyzes the conversion of GTP to 2,5-diamino-6-ribosylamino-4(3H)-pyrimidinone 5'-phosphate (DARP), formate and pyrophosphate. The sequence is that of GTP cyclohydrolase-2 from Enterobacter sp. (strain 638).